The primary structure comprises 356 residues: Cyclin-dependent kinase 5 activator 1 (356 aa).

2 disordered regions span residues 1 to 53 (MGAN…AKES) and 66 to 99 (IQPV…FTRN). 2 stretches are compositionally biased toward low complexity: residues 40 to 49 (SNTSSRSSSN) and 71 to 92 (SRRS…SSDS).

The protein belongs to the cyclin-dependent kinase 5 activator family. In terms of assembly, heterodimer composed of a catalytic subunit cdk-5 and a regulatory subunit cdka-1. Interaction with cdka-1 is required for cdk-5 activation. In terms of tissue distribution, expressed in all classes of neurons in the ventral cord.

Its subcellular location is the cytoplasm. It localises to the cell projection. The protein localises to the dendrite. The protein resides in the axon. In terms of biological role, activator of the kinase cdk-5. In several motor neurons, promotes the polarized trafficking of synaptic vesicles and dense-core vesicles. In the ventral nerve cord, regulates the synaptic localization of the glutamate receptor, glr-1. In DA motor neurons, regulates axonal transport of synaptic vesicle precursors by inhibiting dynein-mediated retrograde transport. Regulates the polarized distribution of dense-core vesicles in DB motor neurons. May regulate these processes in association with cdk-5. May also play a role in GABAergic synaptic vesicle localization in the ventral nerve cord. The protein is Cyclin-dependent kinase 5 activator 1 of Caenorhabditis elegans.